The sequence spans 465 residues: MQKITHWQEYKIEAKSLILLSLPILLAQIAQNSMGLVDTIMAGRVSAADMAAISVGASIWMPLVLFGQGLLLALPPTISYLNGSAQRHRIAHQVRQGIWIILFSIVPLALLIYHSDTVINRMGMEEHLAQITIKYLHAMLFGLPAYLLLVNFRCLNDGLAKTKPAMIITLIGLLLNIPLNYIFIYGKLGVPAFGAVGCGIATTIVNWIMCILMISYTKSARNQRDLKVFENIIELPNPATLKKLFKLGLPIAIAICSEVALFALTSLLLSPLGTNAVASHQIALNTSSFIFMLPMSLGMATTILVGQSLGERSPLKAKDISYVALFIGLATATLTAFLTVVLRYQIAGIFVKDTEVISLAASLLLLNALYQFSDAVQVVVGGALRGYKDTKAILYITLFCYWVLGMPIGYILSRTDLITAHMGPTGFWIAFVVSLTVAAVLLFYRMYKIQKQSDEQLLTKLEKLK.

10 helical membrane-spanning segments follow: residues 50-72, 92-114, 127-149, 164-186, 193-215, 248-270, 283-305, 320-342, 393-412, and 422-444; these read MAAISVGASIWMPLVLFGQGLLL, HQVRQGIWIILFSIVPLALLIYH, HLAQITIKYLHAMLFGLPAYLLL, PAMIITLIGLLLNIPLNYIFIYG, FGAVGCGIATTIVNWIMCILMIS, GLPIAIAICSEVALFALTSLLLS, ALNTSSFIFMLPMSLGMATTILV, ISYVALFIGLATATLTAFLTVVL, ILYITLFCYWVLGMPIGYIL, and MGPTGFWIAFVVSLTVAAVLLFY.

It belongs to the multi antimicrobial extrusion (MATE) (TC 2.A.66.1) family.

It localises to the cell inner membrane. In terms of biological role, multidrug efflux pump. This Mannheimia succiniciproducens (strain KCTC 0769BP / MBEL55E) protein is Probable multidrug resistance protein NorM (norM).